We begin with the raw amino-acid sequence, 490 residues long: Glutamyl-tRNA(Gln) amidotransferase subunit A (490 aa).

Catalysis depends on charge relay system residues Lys78 and Ser158. The interval 131 to 159 (SNETSRFGPPINPWRRKGDNAGLTPGGSS) is disordered. Residue Ser182 is the Acyl-ester intermediate of the active site.

This sequence belongs to the amidase family. GatA subfamily. As to quaternary structure, heterotrimer of A, B and C subunits.

It carries out the reaction L-glutamyl-tRNA(Gln) + L-glutamine + ATP + H2O = L-glutaminyl-tRNA(Gln) + L-glutamate + ADP + phosphate + H(+). Its function is as follows. Allows the formation of correctly charged Gln-tRNA(Gln) through the transamidation of misacylated Glu-tRNA(Gln) in organisms which lack glutaminyl-tRNA synthetase. The reaction takes place in the presence of glutamine and ATP through an activated gamma-phospho-Glu-tRNA(Gln). This chain is Glutamyl-tRNA(Gln) amidotransferase subunit A, found in Hyphomonas neptunium (strain ATCC 15444).